Here is a 226-residue protein sequence, read N- to C-terminus: uncharacterized protein (226 aa).

Positions 4–226 (LQFQQVGYWY…FTVKENVAVV (223 aa)) constitute an ABC transporter domain. Residue 38–45 (GTSGTGKT) coordinates ATP.

The protein belongs to the ABC transporter superfamily.

This is an uncharacterized protein from Bacillus subtilis (strain 168).